The sequence spans 440 residues: GTPase Obg (440 aa).

An Obg domain is found at 5 to 163 (STFVDQTKIE…RTLRLELKVL (159 aa)). Residues 164–338 (ADVGLVGFPS…LMSRAADLVS (175 aa)) form the OBG-type G domain. Residues 170 to 177 (GFPSVGKS), 195 to 199 (FTTLK), 217 to 220 (DLPG), 288 to 291 (SQMD), and 319 to 321 (SSV) each bind GTP. 2 residues coordinate Mg(2+): serine 177 and threonine 197. The region spanning 362 to 440 (YHRPEKMEFT…IGDFSFEFVQ (79 aa)) is the OCT domain.

It belongs to the TRAFAC class OBG-HflX-like GTPase superfamily. OBG GTPase family. In terms of assembly, monomer. The cofactor is Mg(2+).

Its subcellular location is the cytoplasm. Functionally, an essential GTPase which binds GTP, GDP and possibly (p)ppGpp with moderate affinity, with high nucleotide exchange rates and a fairly low GTP hydrolysis rate. Plays a role in control of the cell cycle, stress response, ribosome biogenesis and in those bacteria that undergo differentiation, in morphogenesis control. The protein is GTPase Obg of Lactobacillus delbrueckii subsp. bulgaricus (strain ATCC 11842 / DSM 20081 / BCRC 10696 / JCM 1002 / NBRC 13953 / NCIMB 11778 / NCTC 12712 / WDCM 00102 / Lb 14).